The sequence spans 252 residues: Imidazole glycerol phosphate synthase subunit HisF (252 aa).

Active-site residues include Asp11 and Asp130.

Belongs to the HisA/HisF family. In terms of assembly, heterodimer of HisH and HisF.

The protein localises to the cytoplasm. The enzyme catalyses 5-[(5-phospho-1-deoxy-D-ribulos-1-ylimino)methylamino]-1-(5-phospho-beta-D-ribosyl)imidazole-4-carboxamide + L-glutamine = D-erythro-1-(imidazol-4-yl)glycerol 3-phosphate + 5-amino-1-(5-phospho-beta-D-ribosyl)imidazole-4-carboxamide + L-glutamate + H(+). It functions in the pathway amino-acid biosynthesis; L-histidine biosynthesis; L-histidine from 5-phospho-alpha-D-ribose 1-diphosphate: step 5/9. In terms of biological role, IGPS catalyzes the conversion of PRFAR and glutamine to IGP, AICAR and glutamate. The HisF subunit catalyzes the cyclization activity that produces IGP and AICAR from PRFAR using the ammonia provided by the HisH subunit. The sequence is that of Imidazole glycerol phosphate synthase subunit HisF from Bacillus cereus (strain AH820).